A 126-amino-acid chain; its full sequence is Holo-[acyl-carrier-protein] synthase (126 aa).

Positions 8 and 57 each coordinate Mg(2+).

The protein belongs to the P-Pant transferase superfamily. AcpS family. It depends on Mg(2+) as a cofactor.

It localises to the cytoplasm. It catalyses the reaction apo-[ACP] + CoA = holo-[ACP] + adenosine 3',5'-bisphosphate + H(+). Transfers the 4'-phosphopantetheine moiety from coenzyme A to a Ser of acyl-carrier-protein. The polypeptide is Holo-[acyl-carrier-protein] synthase (Vibrio cholerae serotype O1 (strain ATCC 39315 / El Tor Inaba N16961)).